The sequence spans 260 residues: MDINRWSLQGMTALVTGGSKGIGYAIVEELVGFGARVHICDIDETLLNECLSGWHAKGFEVSGSICDVSSRPQRVQLMQTVSSLFGAKLNILINNVGKYILKPTLESTAEDFSSLMATNLESAYYISQLAHPLLKASGNGNIVFISSVTGVVSGTSTIYGVTKGALNQLARDLACEWASDNIRANSVAPWVTATSLVQKYLEDEIFAEAMFSRTPLGRACEPREVASLVTFLCLPAASYITGQTICIDGGFTVNGFSYKP.

Residue 14-38 coordinates NADP(+); the sequence is LVTGGSKGIGYAIVEELVGFGARVH. A substrate-binding site is contributed by serine 147. Catalysis depends on tyrosine 159, which acts as the Proton acceptor.

It belongs to the short-chain dehydrogenases/reductases (SDR) family. SDR65C subfamily.

In Arabidopsis thaliana (Mouse-ear cress), this protein is Tropinone reductase homolog At1g07450.